The primary structure comprises 229 residues: PKHD-type hydroxylase BBta_1313 (229 aa).

The 103-residue stretch at 78–180 (HIFPPLFNRY…RIASFFWLQS (103 aa)) folds into the Fe2OG dioxygenase domain. 3 residues coordinate Fe cation: His98, Asp100, and His161. A 2-oxoglutarate-binding site is contributed by Arg171.

The cofactor is Fe(2+). L-ascorbate is required as a cofactor.

This chain is PKHD-type hydroxylase BBta_1313, found in Bradyrhizobium sp. (strain BTAi1 / ATCC BAA-1182).